A 208-amino-acid polypeptide reads, in one-letter code: Outer-membrane lipoprotein carrier protein (208 aa).

A signal peptide spans 1–21; the sequence is MRLIRTLFVAALAMGTSLAHA.

Belongs to the LolA family. In terms of assembly, monomer.

It localises to the periplasm. Participates in the translocation of lipoproteins from the inner membrane to the outer membrane. Only forms a complex with a lipoprotein if the residue after the N-terminal Cys is not an aspartate (The Asp acts as a targeting signal to indicate that the lipoprotein should stay in the inner membrane). This Pseudomonas paraeruginosa (strain DSM 24068 / PA7) (Pseudomonas aeruginosa (strain PA7)) protein is Outer-membrane lipoprotein carrier protein.